The following is a 184-amino-acid chain: ATP synthase subunit b (184 aa).

The chain crosses the membrane as a helical span at residues 19-39; it reads IIVGVILVLLLTWLIAKAVVP.

The protein belongs to the ATPase B chain family. F-type ATPases have 2 components, F(1) - the catalytic core - and F(0) - the membrane proton channel. F(1) has five subunits: alpha(3), beta(3), gamma(1), delta(1), epsilon(1). F(0) has three main subunits: a(1), b(2) and c(10-14). The alpha and beta chains form an alternating ring which encloses part of the gamma chain. F(1) is attached to F(0) by a central stalk formed by the gamma and epsilon chains, while a peripheral stalk is formed by the delta and b chains.

The protein resides in the cell membrane. Its function is as follows. F(1)F(0) ATP synthase produces ATP from ADP in the presence of a proton or sodium gradient. F-type ATPases consist of two structural domains, F(1) containing the extramembraneous catalytic core and F(0) containing the membrane proton channel, linked together by a central stalk and a peripheral stalk. During catalysis, ATP synthesis in the catalytic domain of F(1) is coupled via a rotary mechanism of the central stalk subunits to proton translocation. Component of the F(0) channel, it forms part of the peripheral stalk, linking F(1) to F(0). This Cutibacterium acnes (strain DSM 16379 / KPA171202) (Propionibacterium acnes) protein is ATP synthase subunit b.